A 204-amino-acid polypeptide reads, in one-letter code: Ribosome maturation factor RimP (204 aa).

Residues glycine 176–histidine 204 form a disordered region. A compositionally biased stretch (acidic residues) spans serine 181–glutamate 198.

This sequence belongs to the RimP family.

Its subcellular location is the cytoplasm. Functionally, required for maturation of 30S ribosomal subunits. The protein is Ribosome maturation factor RimP of Cereibacter sphaeroides (strain KD131 / KCTC 12085) (Rhodobacter sphaeroides).